The chain runs to 273 residues: Nitrogenase iron protein (273 aa).

Residue 8 to 15 (GKGGIGKS) coordinates ATP. Residue Cys95 participates in [4Fe-4S] cluster binding. Arg98 is subject to ADP-ribosylarginine; by dinitrogenase reductase ADP-ribosyltransferase. Cys130 lines the [4Fe-4S] cluster pocket.

The protein belongs to the NifH/BchL/ChlL family. As to quaternary structure, homodimer. [4Fe-4S] cluster serves as cofactor. In terms of processing, the reversible ADP-ribosylation of Arg-98 inactivates the nitrogenase reductase and regulates nitrogenase activity.

The catalysed reaction is N2 + 8 reduced [2Fe-2S]-[ferredoxin] + 16 ATP + 16 H2O = H2 + 8 oxidized [2Fe-2S]-[ferredoxin] + 2 NH4(+) + 16 ADP + 16 phosphate + 6 H(+). The key enzymatic reactions in nitrogen fixation are catalyzed by the nitrogenase complex, which has 2 components: the iron protein and the molybdenum-iron protein. The polypeptide is Nitrogenase iron protein (Roseiflexus sp. (strain RS-1)).